Here is a 514-residue protein sequence, read N- to C-terminus: Nucleus accumbens-associated protein 1 (514 aa).

A BTB domain is found at cysteine 30–methionine 94. A Glycyl lysine isopeptide (Lys-Gly) (interchain with G-Cter in SUMO1); alternate cross-link involves residue lysine 167. Lysine 167 is covalently cross-linked (Glycyl lysine isopeptide (Lys-Gly) (interchain with G-Cter in SUMO2); alternate). A Glycyl lysine isopeptide (Lys-Gly) (interchain with G-Cter in SUMO2) cross-link involves residue lysine 182. 2 disordered regions span residues arginine 183–alanine 205 and proline 242–threonine 279. Residue serine 187 is modified to Phosphoserine. The span at proline 242–glycine 251 shows a compositional bias: polar residues. Serine 245 is modified (phosphoserine; by PKC). A compositionally biased stretch (low complexity) spans threonine 252–tyrosine 264. Acidic residues predominate over residues glutamate 267–threonine 279. Glycyl lysine isopeptide (Lys-Gly) (interchain with G-Cter in SUMO2) cross-links involve residues lysine 304, lysine 438, lysine 466, and lysine 485. In terms of domain architecture, BEN spans glycine 360–valine 457. Phosphoserine is present on residues serine 492 and serine 496.

In terms of assembly, homooligomer; mediated by the BTB domain. Interacts with HDAC3 and HDAC4. Interacts (via BTB domain) with CUL3, PSMD7 and RCOR1. In terms of tissue distribution, ubiquitously expressed with higher expression in the brain, kidney and liver, and at lower levels in heart, lung and testes.

The protein resides in the nucleus. It is found in the cytoplasm. Functionally, functions as a transcriptional repressor. Seems to function as a transcriptional corepressor in neuronal cells through recruitment of HDAC3 and HDAC4. Contributes to tumor progression, and tumor cell proliferation and survival. This may be mediated at least in part through repressing transcriptional activity of GADD45GIP1. Required for recruiting the proteasome from the nucleus to the cytoplasm and dendritic spines. Involved in the acute behavioral and neurological responses to cocaine and amphetamines. In Mus musculus (Mouse), this protein is Nucleus accumbens-associated protein 1 (Nacc1).